The primary structure comprises 323 residues: Glucokinase (323 aa).

ATP is bound at residue 8–13 (GDVGGT).

The protein belongs to the bacterial glucokinase family.

Its subcellular location is the cytoplasm. The enzyme catalyses D-glucose + ATP = D-glucose 6-phosphate + ADP + H(+). The polypeptide is Glucokinase (Yersinia enterocolitica serotype O:8 / biotype 1B (strain NCTC 13174 / 8081)).